A 115-amino-acid polypeptide reads, in one-letter code: Biotrophy-associated secreted protein 1 (115 aa).

Positions 1–22 (MHVFNFAALFTVLATFTATAAA) are cleaved as a signal peptide. The interval 24 to 115 (DQGSNTFDQR…GIRRVENYYP (92 aa)) is disordered. 2 stretches are compositionally biased toward basic and acidic residues: residues 46-55 (IREEKQENVG) and 91-115 (QQKE…NYYP).

It localises to the secreted. Its subcellular location is the host cytoplasm. Functionally, secreted effector involved in biotrophic colonization of plant cells. Induces an early, basal defense response in susceptible rice, including rapid callose deposition and ROS production in leaves and calli. Also promotes sporulation and mycelia growth suggesting a role across the whole process of interaction, from the biotrophic phase to sporulation. In Pyricularia oryzae (strain 70-15 / ATCC MYA-4617 / FGSC 8958) (Rice blast fungus), this protein is Biotrophy-associated secreted protein 1.